The chain runs to 1158 residues: Transient receptor potential cation channel subfamily M member 5 (1158 aa).

Topologically, residues 1-729 are cytoplasmic; it reads MQTTQSSCPG…LTRWRKFWGA (729 aa). S129 is modified (phosphoserine; by PKC). Positions 341, 350, 353, and 354 each coordinate Ca(2+). Residues 488–507 form a disordered region; sequence GRRMEERGPPKRPAGQKWLP. Residues 552 to 572 adopt a coiled-coil conformation; it reads KIIKEMSHLEKEAEVARTMRE. Residues 730–754 traverse the membrane as a helical segment; that stretch reads PVTVFLGNVVMYFAFLFLFTYVLLV. At 755–764 the chain is on the extracellular side; sequence DFRPPPQGPS. The chain crosses the membrane as a helical span at residues 765–784; it reads GSEVTLYFWVFTLVLEEIRQ. The Ca(2+) site is built by E781 and Q784. Residues 785–805 are Cytoplasmic-facing; sequence GFFTDEDTHLVKKFTLYVEDN. Residues 806–824 form a helical membrane-spanning segment; sequence WNKCDMVAIFLFIVGVTCR. Residues N807 and D810 each coordinate Ca(2+). Residues 825 to 831 are Extracellular-facing; it reads MVPSVFE. The chain crosses the membrane as a helical span at residues 832–854; the sequence is AGRTVLAIDFMVFTLRLIHIFAI. Residues 855-863 lie on the Cytoplasmic side of the membrane; sequence HKQLGPKII. A helical transmembrane segment spans residues 864–893; it reads IVERMMKDVFFFLFFLSVWLVAYGVTTQAL. Topologically, residues 894 to 902 are extracellular; sequence LHPHDGRLE. The segment at residues 903 to 938 is an intramembrane region (pore-forming); it reads WIFRRVLYRPYLQIFGQIPLDEIDEARVNCSLHPLL. The short motif at 917-919 is the Selectivity filter element; it reads FGQ. Over 939 to 950 the chain is Extracellular; that stretch reads LESSASCPNLYA. A helical transmembrane segment spans residues 951–985; it reads NWLVILLLVTFLLVTNVLLMNLLIAMFSYTFQVVQ. At 986 to 1158 the chain is on the cytoplasmic side; sequence GNADMFWKFQ…LESGLPPSDT (173 aa). Residue E1002 participates in Ca(2+) binding. Over residues 1127–1141 the composition is skewed to polar residues; that stretch reads TYSSSQNCGCRSQPA. Residues 1127–1158 are disordered; it reads TYSSSQNCGCRSQPASARDREYLESGLPPSDT.

Belongs to the transient receptor (TC 1.A.4) family. LTrpC subfamily. TRPM5 sub-subfamily. In terms of assembly, homotetramer. Multiple phosphorylation sites regulate the Gq/ TRPM5 modulation axis, with the Ser-129 playing a substantial role in this positive modulation. As to expression, strongly expressed in liver, heart, testis, brain and kidney. Detected in fetal liver, kidney, spleen, brain, heart and lung, and in adult skin, eyes, spleen, stomach, small intestine, colon, lung, bladder, pancreas and thymus. Biallelically expressed at all stages and tissues examined. Also expressed in subsets of taste receptor cells of the tongue, in olfactory sensory neurons of the main olfactory epithelium and in the vomeronasal organ.

It localises to the cell membrane. The enzyme catalyses Na(+)(in) = Na(+)(out). It carries out the reaction K(+)(in) = K(+)(out). Ca(2+)-activated cation channel. Displays voltage dependence modulation. Regulated by PI(4,5)P2 levels. PI(4,5)P 2 reverses the Ca(2+) -induced desensitization of channels. Inhibited by flufenamic acid with an IC(50) of 24.5 uM and spermine with an IC(50) of 37 uM. Is a highly temperature-sensitive, heat activated channel showing a steep increase of inward currents at temperatures between 15 and 35 degrees Celsius. Heat activation is due to a shift of the voltage-dependent activation curve to negative potentials. The channel is blocked by extracellular acidification. Monovalent cation-selective ion channel activated by intracellular Ca(2+) in a voltage- and temperature-dependent manner. Mediates the transport of Na(+), K(+) and Cs(+) ions equally well. Activated directly by increase in intracellular Ca(2+), but is impermeable to it. The activation mechanism of TRPM5 involves a multistep process. TRPM5 activation involves ligand binding (i.e., tastant molecule, glucose stimulation) to Gq/G-protein coupled receptors (GPCR) and leads to the breakdown of phosphatidylinositol bisphosphate (PIP2) into diacylglycerol (DAG) and inositol trisphosphate (IP3), IP3 binds to its receptors in the endoplasmic reticulum and cause Ca(2+) release. Simultaneously with the intracellular Ca(2+) release, DAG activates the protein kinase C (PKC), which phosphorylates the TRPM5 channel. This phosphorylation combined with the bound Ca(2+), leads to a robust inward current allowing the entry of sodium ions (Na+) into the cell. This ion influx depolarizes the cell membrane, generating action potentials that propagate TRPM5 signals. Is a key player in sensing sweet, umami and bitter stimuli. May also be involved in sensing semiochemicals. Involved in insulin secretion by pancreatic beta cells. This is Transient receptor potential cation channel subfamily M member 5 from Mus musculus (Mouse).